Consider the following 154-residue polypeptide: Ribosomal RNA large subunit methyltransferase H (154 aa).

Residues Gly103 and 122–127 (FSKLTF) each bind S-adenosyl-L-methionine.

Belongs to the RNA methyltransferase RlmH family. Homodimer.

The protein resides in the cytoplasm. The catalysed reaction is pseudouridine(1915) in 23S rRNA + S-adenosyl-L-methionine = N(3)-methylpseudouridine(1915) in 23S rRNA + S-adenosyl-L-homocysteine + H(+). In terms of biological role, specifically methylates the pseudouridine at position 1915 (m3Psi1915) in 23S rRNA. This is Ribosomal RNA large subunit methyltransferase H from Caldicellulosiruptor saccharolyticus (strain ATCC 43494 / DSM 8903 / Tp8T 6331).